An 853-amino-acid polypeptide reads, in one-letter code: Aminotransferase PigE (853 aa).

503-504 (GT) provides a ligand contact to pyridoxal 5'-phosphate. Lysine 645 carries the post-translational modification N6-(pyridoxal phosphate)lysine. Threonine 680 lines the pyridoxal 5'-phosphate pocket.

The protein belongs to the class-III pyridoxal-phosphate-dependent aminotransferase family. In terms of assembly, homodimer. Pyridoxal 5'-phosphate is required as a cofactor.

It functions in the pathway antibiotic biosynthesis; prodigiosin biosynthesis. Functionally, involved in the biosynthesis of 2-methyl-3-n-amyl-pyrrole (MAP), one of the terminal products involved in the biosynthesis of the red antibiotic prodigiosin (Pig). Catalyzes the transamination to the aldehyde group of 3-acetyloctanal, resulting in an aminoketone, which spontaneously cyclizes to yield the dihydro form of MAP (H2MAP). The sequence is that of Aminotransferase PigE from Serratia sp. (strain ATCC 39006) (Prodigiosinella confusarubida).